Reading from the N-terminus, the 442-residue chain is Cytochrome c biogenesis protein CcsB (442 aa).

3 helical membrane passes run 17–37, 76–96, and 162–182; these read LRLA…GTVI, TPWY…CTLT, and LGPI…ILGA.

The protein belongs to the Ccs1/CcsB family. As to quaternary structure, may interact with CcsA.

It is found in the cellular thylakoid membrane. Its function is as follows. Required during biogenesis of c-type cytochromes (cytochrome c6 and cytochrome f) at the step of heme attachment. The sequence is that of Cytochrome c biogenesis protein CcsB from Thermosynechococcus vestitus (strain NIES-2133 / IAM M-273 / BP-1).